Consider the following 376-residue polypeptide: Protein-glutamate methylesterase/protein-glutamine glutaminase (376 aa).

A Response regulatory domain is found at 5 to 122; the sequence is KVLIVDDSAL…QHTFEDYTDE (118 aa). A 4-aspartylphosphate modification is found at D56. In terms of domain architecture, CheB-type methylesterase spans 185–376; the sequence is SKPSHKVIAL…PEKILALIKK (192 aa). Catalysis depends on residues S197, H223, and D319.

Belongs to the CheB family. Phosphorylated by CheA. Phosphorylation of the N-terminal regulatory domain activates the methylesterase activity.

The protein localises to the cytoplasm. The enzyme catalyses [protein]-L-glutamate 5-O-methyl ester + H2O = L-glutamyl-[protein] + methanol + H(+). It catalyses the reaction L-glutaminyl-[protein] + H2O = L-glutamyl-[protein] + NH4(+). In terms of biological role, involved in chemotaxis. Part of a chemotaxis signal transduction system that modulates chemotaxis in response to various stimuli. Catalyzes the demethylation of specific methylglutamate residues introduced into the chemoreceptors (methyl-accepting chemotaxis proteins or MCP) by CheR. Also mediates the irreversible deamidation of specific glutamine residues to glutamic acid. The protein is Protein-glutamate methylesterase/protein-glutamine glutaminase of Hydrogenovibrio crunogenus (strain DSM 25203 / XCL-2) (Thiomicrospira crunogena).